The following is a 91-amino-acid chain: Large ribosomal subunit protein bL31B (91 aa).

Belongs to the bacterial ribosomal protein bL31 family. Type B subfamily. In terms of assembly, part of the 50S ribosomal subunit.

The sequence is that of Large ribosomal subunit protein bL31B from Neisseria meningitidis serogroup B (strain ATCC BAA-335 / MC58).